The following is a 171-amino-acid chain: O-acetyl-ADP-ribose deacetylase 1 (171 aa).

The region spanning 1 to 171 (MKKITVIQGD…NYDLYLKLLN (171 aa)) is the Macro domain. Substrate-binding positions include 10–11 (DI), N24, 32–34 (GVD), and 121–125 (STGIY). Residue D34 is the Proton acceptor of the active site.

Belongs to the MacroD-type family. YmdB subfamily. Homodimer. Interacts with RNase III.

It catalyses the reaction 3''-O-acetyl-ADP-D-ribose + H2O = ADP-D-ribose + acetate + H(+). It carries out the reaction 2''-O-acetyl-ADP-D-ribose + H2O = ADP-D-ribose + acetate + H(+). Its function is as follows. Deacetylates O-acetyl-ADP ribose to yield ADP-ribose and free acetate. Down-regulates ribonuclease 3 (RNase III) activity. Acts by interacting directly with the region of the ribonuclease that is required for dimerization/activation. The protein is O-acetyl-ADP-ribose deacetylase 1 of Pantoea vagans (strain C9-1) (Pantoea agglomerans (strain C9-1)).